Reading from the N-terminus, the 306-residue chain is tRNA (guanine-N(7)-)-methyltransferase (306 aa).

Positions 1 to 19 are enriched in polar residues; sequence MSSTAPLDSKATEQITTAA. The segment at 1–65 is disordered; sequence MSSTAPLDSK…EASPELPSDE (65 aa). S-adenosyl-L-methionine is bound by residues Gly121, 144–145, 180–181, and Cys200; these read EI and NA. The active site involves Asp203. 278–280 lines the S-adenosyl-L-methionine pocket; it reads TEE.

This sequence belongs to the class I-like SAM-binding methyltransferase superfamily. TrmB family. Forms a complex with TRM82.

Its subcellular location is the nucleus. The catalysed reaction is guanosine(46) in tRNA + S-adenosyl-L-methionine = N(7)-methylguanosine(46) in tRNA + S-adenosyl-L-homocysteine. It participates in tRNA modification; N(7)-methylguanine-tRNA biosynthesis. Functionally, catalyzes the formation of N(7)-methylguanine at position 46 (m7G46) in tRNA. In Lodderomyces elongisporus (strain ATCC 11503 / CBS 2605 / JCM 1781 / NBRC 1676 / NRRL YB-4239) (Yeast), this protein is tRNA (guanine-N(7)-)-methyltransferase.